A 53-amino-acid polypeptide reads, in one-letter code: uncharacterized protein (53 aa).

It belongs to the ELIP/psbS family.

The protein resides in the plastid. The protein localises to the chloroplast. Possible role in chlorophyll and/or carotenoid binding. This is an uncharacterized protein from Guillardia theta (Cryptophyte).